The following is a 211-amino-acid chain: MSGTLGKVLGVWTNTVSKQGFSLLRFRSLGENPIFSAGGILWTSRHYKTKPTHGIGRYRHLVKVQEPKKKKAKVELRAINVGTDYEYGVLNIHLTAYDMSLAESYAQYVHRLCNRLSIKVEESYAMPTKTMEVMRLPDQGNKMVLDSVLTTHERVVQISGLSATFAEIFLEVLQSNLPEGVRLSVREHTEEDFKGRFKARPELEELLAKLN.

The N-terminal 27 residues, 1 to 27 (MSGTLGKVLGVWTNTVSKQGFSLLRFR), are a transit peptide targeting the mitochondrion. Lysine 198 bears the N6-succinyllysine mark.

The protein belongs to the mitochondrion-specific ribosomal protein mL48 family. Component of the mitochondrial ribosome large subunit (39S) which comprises a 16S rRNA and about 50 distinct proteins. Interacts with OXA1L.

The protein resides in the mitochondrion. The protein is Large ribosomal subunit protein mL48 (Mrpl48) of Mus musculus (Mouse).